The sequence spans 176 residues: Probable inosine/xanthosine triphosphatase (176 aa).

Aspartate 36 serves as a coordination point for Mg(2+).

It belongs to the YjjX NTPase family. Homodimer. Requires Mg(2+) as cofactor. Mn(2+) serves as cofactor.

The enzyme catalyses XTP + H2O = XDP + phosphate + H(+). It catalyses the reaction ITP + H2O = IDP + phosphate + H(+). Its function is as follows. Phosphatase that hydrolyzes non-canonical purine nucleotides such as XTP and ITP to their respective diphosphate derivatives. Probably excludes non-canonical purines from DNA/RNA precursor pool, thus preventing their incorporation into DNA/RNA and avoiding chromosomal lesions. This is Probable inosine/xanthosine triphosphatase from Saccharolobus solfataricus (strain ATCC 35092 / DSM 1617 / JCM 11322 / P2) (Sulfolobus solfataricus).